A 56-amino-acid chain; its full sequence is Ribosome biogenesis protein Nop10 (56 aa).

The protein belongs to the NOP10 family.

In terms of biological role, involved in ribosome biogenesis; more specifically in 18S rRNA pseudouridylation and in cleavage of pre-rRNA. This chain is Ribosome biogenesis protein Nop10, found in Methanococcoides burtonii (strain DSM 6242 / NBRC 107633 / OCM 468 / ACE-M).